Reading from the N-terminus, the 149-residue chain is Cytochrome c-type biogenesis protein CcmE (149 aa).

The Cytoplasmic segment spans residues 1 to 7; the sequence is MTRKQKR. Residues 8–28 traverse the membrane as a helical; Signal-anchor for type II membrane protein segment; sequence LAVIAGGMGFIATAVLLVLFA. The Periplasmic segment spans residues 29-149; it reads FSQSVAYFYM…GVWKGEEASQ (121 aa). Positions 123 and 127 each coordinate heme.

This sequence belongs to the CcmE/CycJ family.

The protein localises to the cell inner membrane. Its function is as follows. Heme chaperone required for the biogenesis of c-type cytochromes. Transiently binds heme delivered by CcmC and transfers the heme to apo-cytochromes in a process facilitated by CcmF and CcmH. This Rhizobium rhizogenes (strain K84 / ATCC BAA-868) (Agrobacterium radiobacter) protein is Cytochrome c-type biogenesis protein CcmE.